Reading from the N-terminus, the 102-residue chain is ATP synthase subunit c (102 aa).

Transmembrane regions (helical) follow at residues 34–54 (IGAG…GYIF) and 80–100 (AVSE…IFVA).

Belongs to the ATPase C chain family. As to quaternary structure, F-type ATPases have 2 components, F(1) - the catalytic core - and F(0) - the membrane proton channel. F(1) has five subunits: alpha(3), beta(3), gamma(1), delta(1), epsilon(1). F(0) has three main subunits: a(1), b(2) and c(10-14). The alpha and beta chains form an alternating ring which encloses part of the gamma chain. F(1) is attached to F(0) by a central stalk formed by the gamma and epsilon chains, while a peripheral stalk is formed by the delta and b chains.

It is found in the cell membrane. In terms of biological role, f(1)F(0) ATP synthase produces ATP from ADP in the presence of a proton or sodium gradient. F-type ATPases consist of two structural domains, F(1) containing the extramembraneous catalytic core and F(0) containing the membrane proton channel, linked together by a central stalk and a peripheral stalk. During catalysis, ATP synthesis in the catalytic domain of F(1) is coupled via a rotary mechanism of the central stalk subunits to proton translocation. Its function is as follows. Key component of the F(0) channel; it plays a direct role in translocation across the membrane. A homomeric c-ring of between 10-14 subunits forms the central stalk rotor element with the F(1) delta and epsilon subunits. The sequence is that of ATP synthase subunit c from Mycoplasma genitalium (strain ATCC 33530 / DSM 19775 / NCTC 10195 / G37) (Mycoplasmoides genitalium).